The primary structure comprises 67 residues: Probable Sec-independent protein translocase protein TatE (67 aa).

Residues 1-21 (MGEISITKLLVVAALVVLLFG) form a helical membrane-spanning segment. Positions 45–67 (DEDAGAKKDANGDLPAEKLTHKE) are disordered.

The protein belongs to the TatA/E family. TatE subfamily.

The protein localises to the cell inner membrane. In terms of biological role, part of the twin-arginine translocation (Tat) system that transports large folded proteins containing a characteristic twin-arginine motif in their signal peptide across membranes. TatE shares overlapping functions with TatA. This chain is Probable Sec-independent protein translocase protein TatE, found in Escherichia fergusonii (strain ATCC 35469 / DSM 13698 / CCUG 18766 / IAM 14443 / JCM 21226 / LMG 7866 / NBRC 102419 / NCTC 12128 / CDC 0568-73).